Reading from the N-terminus, the 245-residue chain is rRNA adenine N-6-methyltransferase (245 aa).

S-adenosyl-L-methionine-binding residues include asparagine 10, leucine 12, glycine 37, glutamate 58, aspartate 83, and asparagine 100.

It belongs to the class I-like SAM-binding methyltransferase superfamily. rRNA adenine N(6)-methyltransferase family.

The catalysed reaction is adenosine(2085) in 23S rRNA + 2 S-adenosyl-L-methionine = N(6)-dimethyladenosine(2085) in 23S rRNA + 2 S-adenosyl-L-homocysteine + 2 H(+). This protein produces a dimethylation of the adenine residue at position 2085 in 23S rRNA, resulting in reduced affinity between ribosomes and macrolide-lincosamide-streptogramin B antibiotics. The polypeptide is rRNA adenine N-6-methyltransferase (ermB) (Enterococcus faecalis (strain ATCC 700802 / V583)).